The following is a 751-amino-acid chain: Meiotic sister-chromatid recombination protein 3 (751 aa).

Disordered stretches follow at residues 54 to 88 (GVGMGRTQSLTGYGRTRSLGAARPSYLGAPPRTYS), 216 to 290 (LRAP…KKQM), 314 to 410 (PALE…EARF), 431 to 504 (TQEN…RPSF), and 558 to 610 (KDVP…SPPQ). The segment covering 216-228 (LRAPPRVQQQRQL) has biased composition (low complexity). Composition is skewed to basic and acidic residues over residues 345–356 (ERSRPAKREVRK) and 384–393 (ERVHNKEKTL). Polar residues predominate over residues 431-496 (TQENSTRDNG…GCETGNTTPK (66 aa)). The segment covering 596–609 (RSSISSSPRRSSPP) has biased composition (low complexity).

The protein resides in the cell membrane. Functionally, may be involved in the control of meiotic sister-chromatid recombination. This Eremothecium gossypii (strain ATCC 10895 / CBS 109.51 / FGSC 9923 / NRRL Y-1056) (Yeast) protein is Meiotic sister-chromatid recombination protein 3 (MSC3).